Here is a 336-residue protein sequence, read N- to C-terminus: Antigen-presenting glycoprotein CD1d1 (336 aa).

A signal peptide spans 1-21 (MRYLPWLLLWAFLQVWGQSEA). Residues 22-305 (QQKNYTFRCL…YWDARQAPVG (284 aa)) are Extracellular-facing. Residues Asn-25, Asn-38, and Asn-60 are each glycosylated (N-linked (GlcNAc...) asparagine). A D-galactosylceramide is bound at residue Asp-98. Intrachain disulfides connect Cys-122/Cys-186 and Cys-226/Cys-281. Asn-128 carries an N-linked (GlcNAc...) asparagine glycan. An a D-galactosylceramide-binding site is contributed by 171–174 (DQGT). The N-linked (GlcNAc...) asparagine glycan is linked to Asn-183. Residues 207-297 (PVAWLSSVPS…LGGQDIILYW (91 aa)) form the Ig-like domain. A helical transmembrane segment spans residues 306 to 326 (LIVFIVLIMLVVVGAVVYYIW). Topologically, residues 327–336 (RRRSAYQDIR) are cytoplasmic. The short motif at 332 to 335 (YQDI) is the Internalization signal element.

As to quaternary structure, heterodimer with B2M (beta-2-microglobulin). Interacts with MHC II and CD74. N-glycosylated. Expressed on cortical thymocytes, on certain T-cell leukemias, and in various other tissues.

It localises to the cell membrane. The protein resides in the endosome membrane. Its subcellular location is the lysosome membrane. Antigen-presenting protein that binds self and non-self glycolipids and presents them to T-cell receptors on natural killer T-cells. In Mus musculus (Mouse), this protein is Antigen-presenting glycoprotein CD1d1 (Cd1d1).